Reading from the N-terminus, the 339-residue chain is D-erythrose-4-phosphate dehydrogenase (339 aa).

11 to 12 (RI) is a binding site for NAD(+). Residues 158–160 (SCT), arginine 204, 217–218 (TK), and arginine 240 contribute to the substrate site. Cysteine 159 (nucleophile) is an active-site residue. Residue asparagine 322 coordinates NAD(+).

The protein belongs to the glyceraldehyde-3-phosphate dehydrogenase family. Epd subfamily. In terms of assembly, homotetramer.

It localises to the cytoplasm. It catalyses the reaction D-erythrose 4-phosphate + NAD(+) + H2O = 4-phospho-D-erythronate + NADH + 2 H(+). The protein operates within cofactor biosynthesis; pyridoxine 5'-phosphate biosynthesis; pyridoxine 5'-phosphate from D-erythrose 4-phosphate: step 1/5. Its function is as follows. Catalyzes the NAD-dependent conversion of D-erythrose 4-phosphate to 4-phosphoerythronate. In Aliivibrio fischeri (strain MJ11) (Vibrio fischeri), this protein is D-erythrose-4-phosphate dehydrogenase.